The primary structure comprises 307 residues: F-box protein At5g03100 (307 aa).

Positions 8–54 (VDFISSLPDEILHHILANTPTKLAIRTSVLSKRWKHVWYETPSISIV) constitute an F-box domain.

The chain is F-box protein At5g03100 from Arabidopsis thaliana (Mouse-ear cress).